The chain runs to 442 residues: Protein trichome birefringence-like 26 (442 aa).

Residues 51-71 form a helical; Signal-anchor for type II membrane protein membrane-spanning segment; that stretch reads FFLYFSLVALAYYFIISSLAV. The GDS motif signature appears at 164-166; sequence GDS. The DCXHWCLPGXXDXWN motif motif lies at 409–423; it reads DCLHWCLPGPIDSWN.

It belongs to the PC-esterase family. TBL subfamily.

It localises to the membrane. May be involved in the O-acetylation of mannan. May act as a bridging protein that binds pectin and other cell wall polysaccharides. Probably involved in maintaining esterification of pectins. This chain is Protein trichome birefringence-like 26 (TBL26), found in Arabidopsis thaliana (Mouse-ear cress).